Consider the following 326-residue polypeptide: D-amino-acid oxidase (326 aa).

Residues Gly-14, Val-15, Ile-16, Asp-36, Ser-44, Ala-48, Ala-49, Ile-50, and Val-157 each coordinate FAD. Tyr-219 and Arg-274 together coordinate D-proline. D-serine-binding residues include Tyr-219 and Arg-274. Residues Arg-274, Gly-299, Gly-300, Gly-302, and Thr-304 each coordinate FAD. Gly-300 contributes to the D-proline binding site. Gly-300 provides a ligand contact to D-serine.

It belongs to the DAMOX/DASOX family. As to quaternary structure, homodimer. The cofactor is FAD.

It is found in the cytoplasm. The protein localises to the secreted. The protein resides in the cell wall. It catalyses the reaction a D-alpha-amino acid + O2 + H2O = a 2-oxocarboxylate + H2O2 + NH4(+). It carries out the reaction D-phenylalanine + O2 + H2O = 3-phenylpyruvate + H2O2 + NH4(+). The enzyme catalyses D-lysine + O2 + H2O = 6-amino-2-oxohexanoate + H2O2 + NH4(+). The catalysed reaction is D-methionine + O2 + H2O = 4-methylsulfanyl-2-oxobutanoate + H2O2 + NH4(+). It catalyses the reaction D-arginine + O2 + H2O = 5-guanidino-2-oxopentanoate + H2O2 + NH4(+). It carries out the reaction D-ornithine + O2 + H2O = 5-amino-2-oxopentanoate + H2O2 + NH4(+). The enzyme catalyses D-leucine + O2 + H2O = 4-methyl-2-oxopentanoate + H2O2 + NH4(+). The catalysed reaction is D-alanine + O2 + H2O = pyruvate + H2O2 + NH4(+). It catalyses the reaction D-valine + O2 + H2O = 3-methyl-2-oxobutanoate + H2O2 + NH4(+). It carries out the reaction D-histidine + O2 + H2O = 3-(imidazol-5-yl)pyruvate + H2O2 + NH4(+). Catalyzes the oxidative deamination of D-amino acids with broad substrate specificity. The protein is D-amino-acid oxidase of Glutamicibacter protophormiae (Brevibacterium protophormiae).